Here is a 585-residue protein sequence, read N- to C-terminus: MAGUK p55 subfamily member 3 (585 aa).

L27 domains lie at 6–60 (EDSG…ERQS) and 61–118 (PTPV…FDPV). The PDZ domain maps to 137–212 (IVRLVKNKEP…LAQSQGSITL (76 aa)). Residues 226-296 (ESKVFMRALF…PSKGFQERRL (71 aa)) enclose the SH3 domain. Ser307 bears the Phosphoserine mark. One can recognise a Guanylate kinase-like domain in the interval 385 to 570 (PRLVVLIGSL…AYSQLKVVLE (186 aa)).

It belongs to the MAGUK family. In terms of assembly, interacts with HTR2C; this interaction stabilizes the receptor at the plasma membrane and prevents the desensitization of the HTR2C receptor-mediated calcium response. Interacts with HTR2A. Interacts with HTR4. Interacts (via PDZ domain) with CADM1 (via C-terminus)Interacts (via PDZ domain) with CADM1; this interaction connects CADM1 with DLG1. Interacts (via Guanylate kinase-like domain) with PALS1. Interacts with DLG1 (via N-terminus); this interaction connects CADM1 with DLG1 and links CADM1 with the regulatory subunit of phosphoinositide-3-kinase (PI3K) by forming a multiprotein complex and participates in cell spreading. In terms of tissue distribution, expressed in retina (at protein level) at the subapical region (SAR) adjacent to adherens junctions at the OLM, and at the OPL.

It localises to the cell membrane. It is found in the apical cell membrane. The protein localises to the cell junction. The protein resides in the adherens junction. Participates in cell spreading through the phosphoinositide-3-kinase (PI3K) pathway by connecting CADM1 to DLG1 and the regulatory subunit of phosphoinositide-3-kinase (PI3K). Stabilizes HTR2C at the plasma membrane and prevents its desensitization. May participates in the maintenance of adherens junctions. This chain is MAGUK p55 subfamily member 3, found in Homo sapiens (Human).